A 232-amino-acid chain; its full sequence is Orotidine 5'-phosphate decarboxylase (232 aa).

Residues aspartate 10, lysine 32, 59–68 (DLKFHDIPNT), threonine 119, arginine 180, glutamine 189, glycine 209, and arginine 210 each bind substrate. Lysine 61 acts as the Proton donor in catalysis.

It belongs to the OMP decarboxylase family. Type 1 subfamily. In terms of assembly, homodimer.

The enzyme catalyses orotidine 5'-phosphate + H(+) = UMP + CO2. Its pathway is pyrimidine metabolism; UMP biosynthesis via de novo pathway; UMP from orotate: step 2/2. In terms of biological role, catalyzes the decarboxylation of orotidine 5'-monophosphate (OMP) to uridine 5'-monophosphate (UMP). In Actinobacillus succinogenes (strain ATCC 55618 / DSM 22257 / CCUG 43843 / 130Z), this protein is Orotidine 5'-phosphate decarboxylase.